A 334-amino-acid chain; its full sequence is GTP 3',8-cyclase (334 aa).

A Radical SAM core domain is found at 13 to 239; that stretch reads KFHRKFYYLR…KVRSHHDGPA (227 aa). Arg22 provides a ligand contact to GTP. Residues Cys29 and Cys33 each contribute to the [4Fe-4S] cluster site. An S-adenosyl-L-methionine-binding site is contributed by Tyr35. Cys36 provides a ligand contact to [4Fe-4S] cluster. A GTP-binding site is contributed by Arg73. An S-adenosyl-L-methionine-binding site is contributed by Gly77. Thr104 contributes to the GTP binding site. Ser128 contacts S-adenosyl-L-methionine. Lys165 contacts GTP. Position 199 (Met199) interacts with S-adenosyl-L-methionine. [4Fe-4S] cluster-binding residues include Cys262 and Cys265. 267–269 provides a ligand contact to GTP; the sequence is RLR. Cys279 contacts [4Fe-4S] cluster.

Belongs to the radical SAM superfamily. MoaA family. As to quaternary structure, monomer and homodimer. [4Fe-4S] cluster serves as cofactor.

It carries out the reaction GTP + AH2 + S-adenosyl-L-methionine = (8S)-3',8-cyclo-7,8-dihydroguanosine 5'-triphosphate + 5'-deoxyadenosine + L-methionine + A + H(+). Its pathway is cofactor biosynthesis; molybdopterin biosynthesis. Its function is as follows. Catalyzes the cyclization of GTP to (8S)-3',8-cyclo-7,8-dihydroguanosine 5'-triphosphate. This Vibrio parahaemolyticus serotype O3:K6 (strain RIMD 2210633) protein is GTP 3',8-cyclase.